The following is a 375-amino-acid chain: Succinyl-diaminopimelate desuccinylase (375 aa).

H66 contributes to the Zn(2+) binding site. D68 is a catalytic residue. Residue D99 participates in Zn(2+) binding. E133 acts as the Proton acceptor in catalysis. E134, E162, and H348 together coordinate Zn(2+).

The protein belongs to the peptidase M20A family. DapE subfamily. Homodimer. Zn(2+) serves as cofactor. Requires Co(2+) as cofactor.

It carries out the reaction N-succinyl-(2S,6S)-2,6-diaminopimelate + H2O = (2S,6S)-2,6-diaminopimelate + succinate. The protein operates within amino-acid biosynthesis; L-lysine biosynthesis via DAP pathway; LL-2,6-diaminopimelate from (S)-tetrahydrodipicolinate (succinylase route): step 3/3. Functionally, catalyzes the hydrolysis of N-succinyl-L,L-diaminopimelic acid (SDAP), forming succinate and LL-2,6-diaminopimelate (DAP), an intermediate involved in the bacterial biosynthesis of lysine and meso-diaminopimelic acid, an essential component of bacterial cell walls. The sequence is that of Succinyl-diaminopimelate desuccinylase from Escherichia coli O1:K1 / APEC.